A 129-amino-acid polypeptide reads, in one-letter code: Small ribosomal subunit protein uS11 (129 aa).

The protein belongs to the universal ribosomal protein uS11 family. In terms of assembly, part of the 30S ribosomal subunit. Interacts with proteins S7 and S18. Binds to IF-3.

Located on the platform of the 30S subunit, it bridges several disparate RNA helices of the 16S rRNA. Forms part of the Shine-Dalgarno cleft in the 70S ribosome. The sequence is that of Small ribosomal subunit protein uS11 from Pseudomonas fluorescens (strain SBW25).